Here is a 114-residue protein sequence, read N- to C-terminus: PDZK1-interacting protein 1 (114 aa).

Residues methionine 1–glutamine 28 are Extracellular-facing. The helical transmembrane segment at proline 29–asparagine 51 threads the bilayer. Over histidine 52–methionine 114 the chain is Cytoplasmic. Serine 85 bears the Phosphoserine mark. The segment at histidine 95 to methionine 114 is disordered. A compositionally biased stretch (basic and acidic residues) spans glutamate 105–methionine 114.

This sequence belongs to the PDZK1-interacting protein 1/SMIM24 family. As to quaternary structure, forms a heterodimer (via N-terminal transmembrane helix) with SLC5A2/SGLT2 (via TM13); this interaction enhances SLC5A2 transporter activity. Interacts with PDZK1.

It is found in the apical cell membrane. Auxiliary protein of electrogenic Na(+)-coupled sugar symporter SLC5A2/SGLT2 and SLC5A1/SGLT1. Essential for the transporter activity of SLC5A2/SGLT2 but not SLC5A1/SGLT1. In Pongo abelii (Sumatran orangutan), this protein is PDZK1-interacting protein 1.